A 212-amino-acid polypeptide reads, in one-letter code: Thymidylate kinase (212 aa).

Position 10 to 17 (10 to 17) interacts with ATP; that stretch reads GIDGCGKT.

The protein belongs to the thymidylate kinase family.

The catalysed reaction is dTMP + ATP = dTDP + ADP. Its function is as follows. Phosphorylation of dTMP to form dTDP in both de novo and salvage pathways of dTTP synthesis. In Synechococcus sp. (strain RCC307), this protein is Thymidylate kinase.